A 250-amino-acid polypeptide reads, in one-letter code: Probable transcriptional regulatory protein Lferr_0060 (250 aa).

The protein belongs to the TACO1 family.

Its subcellular location is the cytoplasm. This is Probable transcriptional regulatory protein Lferr_0060 from Acidithiobacillus ferrooxidans (strain ATCC 53993 / BNL-5-31) (Leptospirillum ferrooxidans (ATCC 53993)).